A 726-amino-acid polypeptide reads, in one-letter code: Peroxisomal bifunctional enzyme (726 aa).

The interval 1 to 284 (MAEYLRLPHS…FAERSAPKWS (284 aa)) is enoyl-CoA hydratase / isomerase. The residue at position 38 (Lys-38) is an N6-succinyllysine. Gly-103 contacts substrate. Position 167 is an N6-acetyllysine; alternate (Lys-167). Position 167 is an N6-succinyllysine; alternate (Lys-167). An N6-acetyllysine modification is found at Lys-173. At Lys-185 the chain carries N6-succinyllysine. Residue Lys-221 is modified to N6-acetyllysine; alternate. N6-succinyllysine; alternate is present on Lys-221. 3 positions are modified to N6-succinyllysine: Lys-282, Lys-292, and Lys-333. The interval 285-575 (TPSGASWKTA…DMLCELGRFG (291 aa)) is 3-hydroxyacyl-CoA dehydrogenase. An N6-acetyllysine mark is found at Lys-348 and Lys-352. The tract at residues 352-371 (KSRQQCGQQRSGPKPRFSSS) is disordered. Residues 353–371 (SRQQCGQQRSGPKPRFSSS) are compositionally biased toward polar residues. An N6-acetyllysine modification is found at Lys-467. Lys-535 bears the N6-succinyllysine mark. N6-acetyllysine; alternate occurs at positions 587, 594, and 713. N6-succinyllysine; alternate is present on residues Lys-587, Lys-594, and Lys-713. The short motif at 724–726 (SKL) is the Microbody targeting signal element. An N6-succinyllysine modification is found at Lys-725.

In the N-terminal section; belongs to the enoyl-CoA hydratase/isomerase family. It in the C-terminal section; belongs to the 3-hydroxyacyl-CoA dehydrogenase family. As to quaternary structure, monomer. In terms of processing, acetylated, leading to enhanced enzyme activity. Acetylation is enhanced by up to 80% after treatment either with trichostin A (TSA) or with nicotinamide (NAM) with highest increase on Lys-348. Acetylation and enzyme activity increased by about 1.5% on addition of fatty acids.

The protein localises to the peroxisome. The enzyme catalyses a (3S)-3-hydroxyacyl-CoA = a (2E)-enoyl-CoA + H2O. The catalysed reaction is a 4-saturated-(3S)-3-hydroxyacyl-CoA = a (3E)-enoyl-CoA + H2O. It carries out the reaction a (3Z)-enoyl-CoA = a 4-saturated (2E)-enoyl-CoA. It catalyses the reaction a (3E)-enoyl-CoA = a 4-saturated (2E)-enoyl-CoA. The enzyme catalyses a (3S)-3-hydroxyacyl-CoA + NAD(+) = a 3-oxoacyl-CoA + NADH + H(+). The catalysed reaction is (2S,3S)-3-hydroxy-2-methylbutanoyl-CoA = (2E)-2-methylbut-2-enoyl-CoA + H2O. It carries out the reaction (3S)-hydroxyhexadecanoyl-CoA + NAD(+) = 3-oxohexadecanoyl-CoA + NADH + H(+). It catalyses the reaction (3S)-hydroxyhexadecanoyl-CoA = (2E)-hexadecenoyl-CoA + H2O. The enzyme catalyses (2E)-hexadecenedioyl-CoA + H2O = (3S)-hydroxyhexadecanedioyl-CoA. The catalysed reaction is (3S)-hydroxyhexadecanedioyl-CoA + NAD(+) = 3-oxohexadecanedioyl-CoA + NADH + H(+). It carries out the reaction (3E,5Z)-tetradecadienoyl-CoA = (2E,5Z)-tetradecadienoyl-CoA. It catalyses the reaction (3E,5Z)-octadienoyl-CoA = (2E,5Z)-octadienoyl-CoA. The enzyme catalyses (3S)-hydroxydecanoyl-CoA + NAD(+) = 3-oxodecanoyl-CoA + NADH + H(+). The catalysed reaction is (3E)-decenoyl-CoA = (2E)-decenoyl-CoA. It carries out the reaction (3Z)-hexenoyl-CoA = (2E)-hexenoyl-CoA. It catalyses the reaction (3E)-hexenoyl-CoA = (2E)-hexenoyl-CoA. The enzyme catalyses (3S)-hydroxydecanoyl-CoA = (2E)-decenoyl-CoA + H2O. The catalysed reaction is (3S)-hydroxyhexanoyl-CoA = (2E)-hexenoyl-CoA + H2O. It participates in lipid metabolism; fatty acid beta-oxidation. Its activity is regulated as follows. Enzyme activity enhanced by acetylation. In terms of biological role, peroxisomal trifunctional enzyme possessing 2-enoyl-CoA hydratase, 3-hydroxyacyl-CoA dehydrogenase, and delta 3, delta 2-enoyl-CoA isomerase activities. Catalyzes two of the four reactions of the long chain fatty acids peroxisomal beta-oxidation pathway. Can also use branched-chain fatty acids such as 2-methyl-2E-butenoyl-CoA as a substrate, which is hydrated into (2S,3S)-3-hydroxy-2-methylbutanoyl-CoA. Optimal isomerase for 2,5 double bonds into 3,5 form isomerization in a range of enoyl-CoA species. Also able to isomerize both 3-cis and 3-trans double bonds into the 2-trans form in a range of enoyl-CoA species. Regulates the amount of medium-chain dicarboxylic fatty acids which are essential regulators of all fatty acid oxidation pathways. Also involved in the degradation of long-chain dicarboxylic acids through peroxisomal beta-oxidation. The protein is Peroxisomal bifunctional enzyme (EHHADH) of Cavia porcellus (Guinea pig).